The chain runs to 405 residues: Scramblase ANY1 (405 aa).

Over 1–51 (MSTTGPLDATLIRDVAVATATKASYDMSDTLYSYLPKVDQFYIPEWLTMQF) the chain is Cytoplasmic. Residues 52-72 (IANNLISFTPLFSYGTTIISI) traverse the membrane as a helical segment. The Lumenal portion of the chain corresponds to 73-76 (EKCK). The chain crosses the membrane as a helical span at residues 77–97 (TALGFSIDICATMLIASILRI). The Cytoplasmic portion of the chain corresponds to 98-103 (SYYLIT). Residues 104 to 124 (PYEITLLRQSLVMIFIQLILL) traverse the membrane as a helical segment. Residues 125–177 (RTSLKYRPDEYKYQNLTDVESLSHLIHDIWFEFFSCINRPKFLSEDWKNLIKS) are Lumenal-facing. Residues 178–198 (LSFTNLLKFSFKIFLAFFYKI) traverse the membrane as a helical segment. The Cytoplasmic segment spans residues 199-223 (LKFFDPNFKRIGAFWQWDDDKNFWR). A helical transmembrane segment spans residues 224–244 (FLALFATVQILVTFFISNILN). Over 245–254 (WDSLAQGLGS) the chain is Lumenal. One can recognise a PQ-loop domain in the interval 252–309 (LGSIIGSLGLLVESLLPLPQIAILYKLKSVQGFKLILLVSWLCGDTLKITYLIFGAKN). A helical transmembrane segment spans residues 255–275 (IIGSLGLLVESLLPLPQIAIL). The Cytoplasmic segment spans residues 276–283 (YKLKSVQG). A helical transmembrane segment spans residues 284–306 (FKLILLVSWLCGDTLKITYLIFG). Over 307-312 (AKNISA) the chain is Lumenal. Residues 313-335 (LFVIFALFQMSLDFYIGGQYIYY) form a helical membrane-spanning segment. At 336–405 (RYYYPKLRHQ…GKSQAQAVTL (70 aa)) the chain is on the cytoplasmic side. Positions 379–405 (LKQDSNDTSDSPQDDQVGKSQAQAVTL) are disordered. The span at 396 to 405 (GKSQAQAVTL) shows a compositional bias: polar residues.

As to quaternary structure, interacts with NEO1.

The protein localises to the golgi apparatus membrane. It is found in the late endosome membrane. Phospholipid scramblase that transports phosphatidylserine (PS) and phosphatidylethalonamine (PE) bidirectionally from one leaflet to the other of the phospholipid bilayer to at least partially collapse the membrane asymmetry established by NEO1 and other flippases. The PS scramblase activity has been disputed. Functions in the trafficking pathway from endosomes to the trans-Golgi network (TGN). The chain is Scramblase ANY1 from Saccharomyces cerevisiae (strain ATCC 204508 / S288c) (Baker's yeast).